The chain runs to 455 residues: Ribosome biogenesis protein NOP53 (455 aa).

Residues 1-15 (MAPTNLTKKPSQYKQ) are compositionally biased toward polar residues. Positions 1 to 25 (MAPTNLTKKPSQYKQSSRKGKKAWR) are disordered. The segment covering 16 to 25 (SSRKGKKAWR) has biased composition (basic residues). The residue at position 31 (serine 31) is a Phosphoserine. The segment at 264-333 (HLMETLDDNE…RNKAKRHEEK (70 aa)) is disordered. Residues 268 to 294 (TLDDNEEEESSSNEEEEEEEEENENEN) show a composition bias toward acidic residues. The segment covering 314 to 328 (VKNKKKTKYQRNKAK) has biased composition (basic residues).

It belongs to the NOP53 family. Interacts with CBF5, FPR3, FPR4, NOP2, PIH1, RRN3, RRP6 and PAP2. Interacts with pre-60S ribosomal particles.

It is found in the nucleus. The protein resides in the nucleolus. It localises to the nucleoplasm. Late-acting factor in the nuclear maturation of 60S ribosomal subunits, which is required for normal acquisition of export competence. Required for the export of the large subunit. Acts to stimulate the RNase activity of the exosome complex, and may recruit the exosome to 7S pre-rRNA for processing. Associates with numerous RNAs including the 27S and 7S pre-rRNAs and the box H/ACA snoRNA snR37. Also interacts (via N-terminal region) with the mature 25S rRNA and the mature 5.8S rRNA. This chain is Ribosome biogenesis protein NOP53, found in Saccharomyces cerevisiae (strain ATCC 204508 / S288c) (Baker's yeast).